We begin with the raw amino-acid sequence, 94 residues long: Large ribosomal subunit protein bL27 (94 aa).

Positions 1-9 (MLRLDLQFF) are excised as a propeptide.

It belongs to the bacterial ribosomal protein bL27 family. The N-terminus is cleaved by ribosomal processing cysteine protease Prp.

The protein is Large ribosomal subunit protein bL27 of Bacillus velezensis (strain DSM 23117 / BGSC 10A6 / LMG 26770 / FZB42) (Bacillus amyloliquefaciens subsp. plantarum).